Reading from the N-terminus, the 101-residue chain is Iron-sulfur cluster assembly protein CyaY (101 aa).

The protein belongs to the frataxin family.

Its function is as follows. Involved in iron-sulfur (Fe-S) cluster assembly. May act as a regulator of Fe-S biogenesis. This chain is Iron-sulfur cluster assembly protein CyaY, found in Rickettsia akari (strain Hartford).